The following is a 901-amino-acid chain: Core protein VP3 (901 aa).

The protein belongs to the orbivirus VP3 family.

It is found in the virion. The VP3 protein is one of the five proteins (with VP1, VP4, VP6 and VP7) which form the inner capsid of the virus. This chain is Core protein VP3 (Segment-3), found in Antilocapra americana (Pronghorn).